Consider the following 340-residue polypeptide: MTTRTKGRGHTAATTQNDRMPGPELSGWISEQLMTGRIPVSDIFCDIENNPGLCYASQMQQTKPNPKTRNSQTQTDPICNHSFEEVVQTLASLATVVQQQTIASESLEQRITSLENGLKPVYDMAKTISSLNRVCAEMVAKYDLLVMTTGRATATAAATEAYWAEHGQPPPGPSLYEESAIRGKIESRDETVPQSVREAFNNLDSTTSLTEENFGKPDISAKDLRNIMYDHLPGFGTAFHQLVQVICKLGKDSNSLDIIHAEFQASLAEGDSPQCALIQITKRVPIFQDAAPPVIHIRSRGDIPRACQKSLRPVPPSPKIDRGWVCVFQLQDGKTLGLKI.

The interval 1–24 is disordered; the sequence is MTTRTKGRGHTAATTQNDRMPGPE. Residues 96–116 adopt a coiled-coil conformation; that stretch reads VVQQQTIASESLEQRITSLEN. A phosphoserine mark is found at Ser-187 and Ser-205. Thr-206 carries the phosphothreonine modification. Position 208 is a phosphoserine (Ser-208). Thr-210 carries the phosphothreonine modification. In terms of domain architecture, VP35 IID spans 215 to 340; sequence GKPDISAKDL…QDGKTLGLKI (126 aa). Lys-309 participates in a covalent cross-link: Glycyl lysine isopeptide (Lys-Gly) (interchain with G-Cter in ubiquitin). Ser-317 is subject to Phosphoserine.

Belongs to the filoviridae polymerase cofactor VP35 family. As to quaternary structure, homodimer. Homooligomer; via the coiled coil domain. Interacts with nucleoprotein NP and polymerase L; VP35 bridges L and NP and allows the formation of the polymerase complex. Also interacts with VP30; this interaction is regulated by VP30 phosphorylation. Interacts with host IKBKE and TBK1; the interactions lead to inhibition of cellular antiviral response by blocking necessary interactions of IKBKE and TBK1 with their substrate IRF3. Interacts with host DYNLL1; this interaction stabilizes VP35 N-terminal oligomerization domain, enhances viral RNA synthesis but does not participate in suppressing the host innate immune response. Interacts with host PRKRA; this interaction inhibits the interaction between RIGI and PRKRA. Interacts with dsRNA. Interacts with host TRIM6; this interaction plays an important role in promoting efficient viral replication. Interacts with host STAU1. Interacts with host IRF7, PIAS1 and UBE2I/UBC9; these interactions mediate the sumoylation of IRF7 and contribute to the inhibition of IFN-type I production. Interacts with host DICER1; this interaction prevents TARBP2/TRBP binding to DICER1 and thus allows the virus to counteract host RNA silencing. Interacts with host TARBP2/TRBP and PRKRA/PACT; these interactions prevent TARBP2 and PRKRA binding to DICER1 and thus allows the virus to counteract host RNA silencing. Post-translationally, phosphorylated by host IKBKE. Phosphorylation contributes to efficient viral replication and transcription. In terms of processing, ubiquitinated by host TRIM6 to facilitate virus replication.

It is found in the virion. The protein resides in the host cytoplasm. Its function is as follows. Plays an essential role in viral RNA synthesis and also a role in suppressing innate immune signaling. Acts as a polymerase cofactor in the RNA polymerase transcription and replication complexes. Serves as nucleoprotein/NP monomer chaperone prior to the formation of the large oligomeric RNA-bound complexes. Regulates RNA synthesis by modulating NP-RNA interactions and interacting with DYNLL1. VP35-NP interaction controls the switch between RNA-bound NP and free NP and thus the switch between genome replication and genome packaging into the nucleocapsid. Prevents establishment of cellular antiviral state, thereby suppressing host DC maturation. Acts by inhibiting host RIGI activation both by shielding dsRNA from detection and by preventing PRKRA binding to RIGI. Blocks virus-induced phosphorylation and activation of interferon regulatory factor 3/IRF3, a transcription factor critical for the induction of interferons alpha and beta. This blockage is produced through the interaction with and inhibition of host IKBKE and TBK1, producing a strong inhibition of the phosphorylation and activation of IRF3. Also inhibits the antiviral effect mediated by the host interferon-induced, double-stranded RNA-activated protein kinase EIF2AK2/PKR. Increases PIAS1-mediated SUMOylation of IRF7, thereby repressing interferon transcription. Also acts as a suppressor of RNA silencing by interacting with host DICER1, TARBP2/TRBP and PRKRA/PACT. As a dimer, binds and sequesters dsRNA contributing to the inhibition of interferon production. The protein is Polymerase cofactor VP35 (VP35) of Epomops franqueti (Franquet's epauletted fruit bat).